Here is a 266-residue protein sequence, read N- to C-terminus: Beta-lactamase OXA-19 (266 aa).

The N-terminal stretch at 1–20 (MKTFAAYVITACLSSTALAS) is a signal peptide. Residue serine 67 is the Acyl-ester intermediate of the active site. Lysine 70 carries the post-translational modification N6-carboxylysine. Substrate is bound at residue 205–207 (KTG).

The protein belongs to the class-D beta-lactamase family.

The catalysed reaction is a beta-lactam + H2O = a substituted beta-amino acid. This is Beta-lactamase OXA-19 (bla) from Pseudomonas aeruginosa.